A 142-amino-acid polypeptide reads, in one-letter code: NADH-quinone oxidoreductase subunit A 2 (142 aa).

3 helical membrane-spanning segments follow: residues 18–38 (FLPL…LLLA), 73–93 (FYLI…IFAW), and 104–124 (GLVH…WLWL).

The protein belongs to the complex I subunit 3 family. As to quaternary structure, NDH-1 is composed of 14 different subunits. Subunits NuoA, H, J, K, L, M, N constitute the membrane sector of the complex.

Its subcellular location is the cell inner membrane. It carries out the reaction a quinone + NADH + 5 H(+)(in) = a quinol + NAD(+) + 4 H(+)(out). NDH-1 shuttles electrons from NADH, via FMN and iron-sulfur (Fe-S) centers, to quinones in the respiratory chain. The immediate electron acceptor for the enzyme in this species is believed to be ubiquinone. Couples the redox reaction to proton translocation (for every two electrons transferred, four hydrogen ions are translocated across the cytoplasmic membrane), and thus conserves the redox energy in a proton gradient. This chain is NADH-quinone oxidoreductase subunit A 2, found in Geobacter sulfurreducens (strain ATCC 51573 / DSM 12127 / PCA).